Reading from the N-terminus, the 273-residue chain is Ribosomal RNA small subunit methyltransferase A (273 aa).

Residues Asn-18, Leu-20, Gly-45, Glu-66, Asp-91, and Asn-113 each coordinate S-adenosyl-L-methionine.

It belongs to the class I-like SAM-binding methyltransferase superfamily. rRNA adenine N(6)-methyltransferase family. RsmA subfamily.

It is found in the cytoplasm. It carries out the reaction adenosine(1518)/adenosine(1519) in 16S rRNA + 4 S-adenosyl-L-methionine = N(6)-dimethyladenosine(1518)/N(6)-dimethyladenosine(1519) in 16S rRNA + 4 S-adenosyl-L-homocysteine + 4 H(+). Its function is as follows. Specifically dimethylates two adjacent adenosines (A1518 and A1519) in the loop of a conserved hairpin near the 3'-end of 16S rRNA in the 30S particle. May play a critical role in biogenesis of 30S subunits. This chain is Ribosomal RNA small subunit methyltransferase A, found in Shigella boydii serotype 4 (strain Sb227).